The primary structure comprises 1068 residues: Target of Nesh-SH3 (1068 aa).

An N-terminal signal peptide occupies residues 1–21; that stretch reads MLSSLGCLLLCGSITLALGNA. N-linked (GlcNAc...) asparagine glycosylation occurs at asparagine 37. In terms of domain architecture, Fibronectin type-III 1 spans 116-214; it reads KPLQLVVGTL…KIFNHKTVVG (99 aa). Disordered regions lie at residues 315 to 351 and 384 to 811; these read SKTPEVEKISARPTTVTPETVPRSTKPTTSSALDVSE and VFSS…SITD. A compositionally biased stretch (low complexity) spans 326-339; the sequence is RPTTVTPETVPRST. Polar residues predominate over residues 340–351; that stretch reads KPTTSSALDVSE. The segment covering 447–462 has biased composition (low complexity); it reads QPTTPAPQQTTSIPST. The span at 463 to 473 shows a compositional bias: basic residues; the sequence is PKRRPRPKPPR. The segment covering 482 to 499 has biased composition (polar residues); it reads AGTITPKISKSPEPTWTT. The span at 532–544 shows a compositional bias: pro residues; it reads RAPPKPKTSPRPR. Polar residues predominate over residues 562-574; sequence PKTSPSPEVSYTT. Low complexity-rich tracts occupy residues 603 to 631 and 737 to 750; these read IPFIPMISPSPSQEELQTTLEETDQSTQE and PPLRSTPRPTGTPL. A compositionally biased stretch (polar residues) spans 802-811; that stretch reads PDNSPCSITD. The Fibronectin type-III 2 domain occupies 833-926; that stretch reads PPTNLTVVTV…NTVAFSTESA (94 aa).

As to quaternary structure, probably interacts with ABI3. As to expression, expressed in brain, heart, lung, liver, pancreas kidney and placenta.

The protein resides in the secreted. This is Target of Nesh-SH3 from Homo sapiens (Human).